Reading from the N-terminus, the 385-residue chain is Iron uptake system component EfeM (385 aa).

The first 22 residues, 1 to 22 (MNFTKIAVSAGCILALCAGCGA), serve as a signal peptide directing secretion.

It belongs to the EfeM/EfeO family. As to quaternary structure, component of the iron transporter efeUOB/M complex composed of EfeU, EfeM and EfeB; EfeU is essential for the complex formation.

It is found in the cell membrane. The protein localises to the membrane raft. Functionally, part of the iron transporter system efeUOB/M involved in iron import. Specifically binds Fe(3+), which is produced by EfeB-mediated oxidation of Fe(2+), and delivers it to the cell membrane permease EfeU. This is Iron uptake system component EfeM from Bacillus subtilis (strain 168).